The following is a 263-amino-acid chain: Linear gramicidin dehydrogenase LgrE (263 aa).

Serine 96 is a catalytic residue.

This sequence belongs to the thioesterase family.

Its function is as follows. In the final step of gramicidin biosynthesis, reduces the pentadecapeptide-aldehyde intermediate, that is released from the terminal module of the non-ribosomal peptide synthetase LgrD, to the final product ethanolamine-containing gramicidin. This chain is Linear gramicidin dehydrogenase LgrE (lgrE), found in Brevibacillus parabrevis.